The following is a 445-amino-acid chain: DDB1- and CUL4-associated factor 13 (445 aa).

7 WD repeats span residues 64 to 104 (GHRD…CIRA), 107 to 146 (AHEG…YGEE), 149 to 191 (PIHT…PMCS), 194 to 234 (WGFD…PLKK), 236 to 276 (ILNM…SPVM), 280 to 321 (DHVS…EVYH), and 323 to 362 (KRMQ…KLGV). The segment at 353–441 (KANASEKLGV…VVSEKKKHIV (89 aa)) is required for nucleolar location.

It belongs to the WD repeat DCAF13/WDSOF1 family. Part of the small subunit (SSU) processome, composed of more than 70 proteins and the RNA chaperone small nucleolar RNA (snoRNA) U3. Component of the DCX(DCAF13) E3 ubiquitin ligase complex, at least composed of CUL4 (CUL4A or CUL4B), DDB1, DCAF13 and RBX1.

The protein localises to the nucleus. It is found in the nucleolus. It participates in protein modification; protein ubiquitination. Functionally, part of the small subunit (SSU) processome, first precursor of the small eukaryotic ribosomal subunit. During the assembly of the SSU processome in the nucleolus, many ribosome biogenesis factors, an RNA chaperone and ribosomal proteins associate with the nascent pre-rRNA and work in concert to generate RNA folding, modifications, rearrangements and cleavage as well as targeted degradation of pre-ribosomal RNA by the RNA exosome. In terms of biological role, substrate-recognition component of a DCX (DDB1-CUL4-X-box) E3 ubiquitin-protein ligase complex. The polypeptide is DDB1- and CUL4-associated factor 13 (DCAF13) (Gallus gallus (Chicken)).